The primary structure comprises 61 residues: Defensin BmKDfsin2 (61 aa).

A signal peptide spans 1–24 (METIVLLFLLALVFCTLEMGMVEA). 3 disulfides stabilise this stretch: cysteine 28/cysteine 49, cysteine 35/cysteine 57, and cysteine 39/cysteine 59.

The protein belongs to the invertebrate defensin family. Type 2 subfamily. Highly expressed in non-venom gland (hemolymph) and moderately expressed in venom gland.

It localises to the secreted. Antibacterial peptide active against Gram-positive bacteria, but not on Gram-negative bacteria. Also has weak blocking activity on Kv1.1/KCNA1, Kv1.2/KCNA2, Kv1.3/KCNA3, KCa3.1/KCNN4/IK, KCa2.3/KCNN3/SK3 and Kv11.1/KCNH2/ERG1 channels (tested at 1 uM). It inhibits potassium channel current by interacting with the pore region. This Olivierus martensii (Manchurian scorpion) protein is Defensin BmKDfsin2.